We begin with the raw amino-acid sequence, 357 residues long: MIEREKLDKVKHRFQEVESLMADPEVANDPDRMRELGQEHSRLEEVVEAIDRYERLLDERDELEGMIRDESGEMEALAKEELEQLETKLPAVEEDLKQKLIPKDPEEEKNAIVEIRAGAGGDEASLFAGDLFRLYTQYAKQQGWTYELIDASPGTQGGFREVIFAVKGEDVYGTLKYEAGVHRVQRVPETESSGRIHTSAATVAVLPEAEEVDVDINPSDLTIETFKATGPGGQSVNTTDSAVRIKHAPSGVEVSCQDEKSQHKNRSKAMRVLRSRVYEKKREEQQAEREEARRSMVGSGDRSAKIRTYNFPQDRVTDHRLEGGQKNHSLQPIMDGEIDPIIDALRAEEHAEKLANL.

An N5-methylglutamine modification is found at Gln-234. The tract at residues 249–308 is disordered; that stretch reads PSGVEVSCQDEKSQHKNRSKAMRVLRSRVYEKKREEQQAEREEARRSMVGSGDRSAKIRT. Basic residues predominate over residues 263-274; that stretch reads HKNRSKAMRVLR. Positions 276 to 294 are enriched in basic and acidic residues; that stretch reads RVYEKKREEQQAEREEARR.

This sequence belongs to the prokaryotic/mitochondrial release factor family. In terms of processing, methylated by PrmC. Methylation increases the termination efficiency of RF1.

It is found in the cytoplasm. Its function is as follows. Peptide chain release factor 1 directs the termination of translation in response to the peptide chain termination codons UAG and UAA. This is Peptide chain release factor 1 from Salinibacter ruber (strain DSM 13855 / M31).